Consider the following 157-residue polypeptide: 3-hydroxyacyl-[acyl-carrier-protein] dehydratase FabZ (157 aa).

Histidine 58 is a catalytic residue.

This sequence belongs to the thioester dehydratase family. FabZ subfamily.

The protein resides in the cytoplasm. It carries out the reaction a (3R)-hydroxyacyl-[ACP] = a (2E)-enoyl-[ACP] + H2O. Functionally, involved in unsaturated fatty acids biosynthesis. Catalyzes the dehydration of short chain beta-hydroxyacyl-ACPs and long chain saturated and unsaturated beta-hydroxyacyl-ACPs. In Brucella melitensis biotype 2 (strain ATCC 23457), this protein is 3-hydroxyacyl-[acyl-carrier-protein] dehydratase FabZ.